The following is a 160-amino-acid chain: Protein-export protein SecB (160 aa).

Belongs to the SecB family. As to quaternary structure, homotetramer, a dimer of dimers. One homotetramer interacts with 1 SecA dimer.

It is found in the cytoplasm. One of the proteins required for the normal export of preproteins out of the cell cytoplasm. It is a molecular chaperone that binds to a subset of precursor proteins, maintaining them in a translocation-competent state. It also specifically binds to its receptor SecA. The sequence is that of Protein-export protein SecB from Rhodospirillum rubrum (strain ATCC 11170 / ATH 1.1.1 / DSM 467 / LMG 4362 / NCIMB 8255 / S1).